Here is a 348-residue protein sequence, read N- to C-terminus: MNNRVGTIGNASPLTADAHPMIDPFGRAVTYLRVSVTDRCDFRCTYCMAENMTFLPKKDLLTLEELDRLCSAFIAKGVSKIRLTGGEPLVRKNIMYLVRKLGAKIGSGLDELTLTTNGSQLSRHAAELHDCGVRRINVSLDTLDPDKFRKITRWGDFDKVMEGIDAAQKAGIKIKLNAVALKNFNDAEIPDLLRFAHGRGMDLTVIETMPMGEIEEDRTDQYLPLSELRADLERQFTLTDIDYQTGGPARYVRVSETGGRLGFITPMTHNFCESCNRVRLTCTGTLYMCLGQNDAADLRAALRATEDDALLHAAIDEAITRKPKGHDFIIDRTHNRPAVARHMSVTGG.

The region spanning 24-248 is the Radical SAM core domain; it reads PFGRAVTYLR…TDIDYQTGGP (225 aa). Arg33 contacts GTP. [4Fe-4S] cluster contacts are provided by Cys40 and Cys44. Residue Tyr46 coordinates S-adenosyl-L-methionine. Cys47 is a binding site for [4Fe-4S] cluster. Arg82 is a binding site for GTP. Gly86 serves as a coordination point for S-adenosyl-L-methionine. Thr115 contributes to the GTP binding site. Position 139 (Ser139) interacts with S-adenosyl-L-methionine. Lys175 lines the GTP pocket. Met209 lines the S-adenosyl-L-methionine pocket. [4Fe-4S] cluster-binding residues include Cys272 and Cys275. Residue 277–279 participates in GTP binding; that stretch reads RVR. Cys289 is a [4Fe-4S] cluster binding site.

The protein belongs to the radical SAM superfamily. MoaA family. Monomer and homodimer. [4Fe-4S] cluster serves as cofactor.

The enzyme catalyses GTP + AH2 + S-adenosyl-L-methionine = (8S)-3',8-cyclo-7,8-dihydroguanosine 5'-triphosphate + 5'-deoxyadenosine + L-methionine + A + H(+). It functions in the pathway cofactor biosynthesis; molybdopterin biosynthesis. Functionally, catalyzes the cyclization of GTP to (8S)-3',8-cyclo-7,8-dihydroguanosine 5'-triphosphate. This is GTP 3',8-cyclase from Rhizobium etli (strain ATCC 51251 / DSM 11541 / JCM 21823 / NBRC 15573 / CFN 42).